The following is a 419-amino-acid chain: MRVAMISMHTSPLEQPGTGDAGGMNVYVKNIAEQLERRGVIVDVFTRATRPLQGEVVNVRPGLRVINCVAGPYEGLSKEELPTQLAAFTGSILAFCREEGVSYDLIHSHYWLSGQVGWLLRDLWQVPWVHTAHTLAAVKNNSLADGDSREPESRRICEQQIVDNADLLIVNTDQEVQDLIEGYDATTCAIRVVPPGADVDRFTPGSDRATERSRRELGIPFRTKVIGFVGRLQRLKGPQVLLRAVAELLDRHPQQQLAVVICGGSSGAGGNELERLQLLAEELGISRCVRFLAPRPPEELVGVYRAADIVAVPSYNESFGLVALEAQACGTPVVATRTGGLPIAVDGGKSGLLVDGHDPSDWADALGKLVLDDDLRIAMGEYAPSHAAKFSWQASAEALHKLYEELPPAGHRGERQPAG.

H9 is a binding site for 1D-myo-inositol 3-phosphate. UDP-N-acetyl-alpha-D-glucosamine contacts are provided by residues 15–16 (QP) and G23. 1D-myo-inositol 3-phosphate is bound by residues 20-25 (DAGGMN), K78, Y110, T134, and R154. UDP-N-acetyl-alpha-D-glucosamine contacts are provided by R231, K236, and R295. The Mg(2+) site is built by Y304, R305, and A307. UDP-N-acetyl-alpha-D-glucosamine contacts are provided by E317 and E325. T331 lines the Mg(2+) pocket.

Belongs to the glycosyltransferase group 1 family. MshA subfamily. As to quaternary structure, homodimer.

The catalysed reaction is 1D-myo-inositol 3-phosphate + UDP-N-acetyl-alpha-D-glucosamine = 1D-myo-inositol 2-acetamido-2-deoxy-alpha-D-glucopyranoside 3-phosphate + UDP + H(+). In terms of biological role, catalyzes the transfer of a N-acetyl-glucosamine moiety to 1D-myo-inositol 3-phosphate to produce 1D-myo-inositol 2-acetamido-2-deoxy-glucopyranoside 3-phosphate in the mycothiol biosynthesis pathway. In Corynebacterium jeikeium (strain K411), this protein is D-inositol 3-phosphate glycosyltransferase.